The chain runs to 119 residues: NADH-quinone oxidoreductase subunit A (119 aa).

The next 3 membrane-spanning stretches (helical) occupy residues 7–27 (YPVL…VSIG), 63–83 (LVAI…PWGV), and 88–108 (IGWP…LGFA).

This sequence belongs to the complex I subunit 3 family. As to quaternary structure, NDH-1 is composed of 14 different subunits. Subunits NuoA, H, J, K, L, M, N constitute the membrane sector of the complex.

It localises to the cell inner membrane. The enzyme catalyses a quinone + NADH + 5 H(+)(in) = a quinol + NAD(+) + 4 H(+)(out). In terms of biological role, NDH-1 shuttles electrons from NADH, via FMN and iron-sulfur (Fe-S) centers, to quinones in the respiratory chain. The immediate electron acceptor for the enzyme in this species is believed to be ubiquinone. Couples the redox reaction to proton translocation (for every two electrons transferred, four hydrogen ions are translocated across the cytoplasmic membrane), and thus conserves the redox energy in a proton gradient. The chain is NADH-quinone oxidoreductase subunit A from Burkholderia mallei (strain NCTC 10247).